The chain runs to 109 residues: Ribonuclease P protein component (109 aa).

It belongs to the RnpA family. In terms of assembly, consists of a catalytic RNA component (M1 or rnpB) and a protein subunit.

It carries out the reaction Endonucleolytic cleavage of RNA, removing 5'-extranucleotides from tRNA precursor.. RNaseP catalyzes the removal of the 5'-leader sequence from pre-tRNA to produce the mature 5'-terminus. It can also cleave other RNA substrates such as 4.5S RNA. The protein component plays an auxiliary but essential role in vivo by binding to the 5'-leader sequence and broadening the substrate specificity of the ribozyme. The protein is Ribonuclease P protein component of Streptococcus agalactiae serotype Ia (strain ATCC 27591 / A909 / CDC SS700).